Reading from the N-terminus, the 574-residue chain is K(+)/H(+) antiporter NhaP2 (574 aa).

The next 13 membrane-spanning stretches (helical) occupy residues I6–V26, I34–L54, Y58–M78, V87–T107, V109–V129, I173–I193, F196–L216, L219–S239, L242–T262, V271–L291, I299–V319, W335–M355, and L359–V379. Residues S405 to Q486 enclose the RCK C-terminal domain.

It belongs to the monovalent cation:proton antiporter 1 (CPA1) transporter (TC 2.A.36) family. NhaP2 subfamily.

It localises to the cell inner membrane. It catalyses the reaction K(+)(in) + H(+)(out) = K(+)(out) + H(+)(in). Functionally, k(+)/H(+) antiporter that extrudes potassium in exchange for external protons and maintains the internal concentration of potassium under toxic levels. This Shewanella sp. (strain MR-7) protein is K(+)/H(+) antiporter NhaP2.